Here is a 116-residue protein sequence, read N- to C-terminus: UPF0102 protein LA_2381 (116 aa).

This sequence belongs to the UPF0102 family.

This Leptospira interrogans serogroup Icterohaemorrhagiae serovar Lai (strain 56601) protein is UPF0102 protein LA_2381.